The sequence spans 634 residues: Glutathione S-transferase C-terminal domain-containing protein (634 aa).

A GST C-terminal domain is found at 131–333 (LGFKKTCLKA…QEVPKVKTAA (203 aa)). Residues 189–233 (RVHNDDKLRRQKLKQQKAAGSEPPSGKGKAKSKASAQKTPKDLAA) form a disordered region. Over residues 204 to 226 (QKAAGSEPPSGKGKAKSKASAQK) the composition is skewed to low complexity.

It belongs to the GSTCD family.

The protein resides in the cytoplasm. The chain is Glutathione S-transferase C-terminal domain-containing protein (Gstcd) from Mus musculus (Mouse).